Reading from the N-terminus, the 166-residue chain is Small ribosomal subunit protein uS5 (166 aa).

Residues 11-74 (FLEKLIAVNR…EKARRNMVDV (64 aa)) enclose the S5 DRBM domain.

It belongs to the universal ribosomal protein uS5 family. In terms of assembly, part of the 30S ribosomal subunit. Contacts proteins S4 and S8.

With S4 and S12 plays an important role in translational accuracy. Its function is as follows. Located at the back of the 30S subunit body where it stabilizes the conformation of the head with respect to the body. This chain is Small ribosomal subunit protein uS5, found in Alteromonas mediterranea (strain DSM 17117 / CIP 110805 / LMG 28347 / Deep ecotype).